The sequence spans 339 residues: Holliday junction branch migration complex subunit RuvB (339 aa).

A large ATPase domain (RuvB-L) region spans residues 2–187; it reads KDVNEEERII…FGIIEHMQYY (186 aa). ATP-binding positions include L26, R27, G68, K71, T72, T73, 134–136, R177, Y187, and R224; that span reads EDF. Residue T72 participates in Mg(2+) binding. Residues 188–258 form a small ATPAse domain (RuvB-S) region; that stretch reads SVEDLEKIIQ…TTKHSLHLLE (71 aa). A head domain (RuvB-H) region spans residues 261-339; sequence DEGLDQTDRK…QLGYPPKDEK (79 aa). DNA-binding residues include R316 and R321.

Belongs to the RuvB family. As to quaternary structure, homohexamer. Forms an RuvA(8)-RuvB(12)-Holliday junction (HJ) complex. HJ DNA is sandwiched between 2 RuvA tetramers; dsDNA enters through RuvA and exits via RuvB. An RuvB hexamer assembles on each DNA strand where it exits the tetramer. Each RuvB hexamer is contacted by two RuvA subunits (via domain III) on 2 adjacent RuvB subunits; this complex drives branch migration. In the full resolvosome a probable DNA-RuvA(4)-RuvB(12)-RuvC(2) complex forms which resolves the HJ.

The protein localises to the cytoplasm. It carries out the reaction ATP + H2O = ADP + phosphate + H(+). Functionally, the RuvA-RuvB-RuvC complex processes Holliday junction (HJ) DNA during genetic recombination and DNA repair, while the RuvA-RuvB complex plays an important role in the rescue of blocked DNA replication forks via replication fork reversal (RFR). RuvA specifically binds to HJ cruciform DNA, conferring on it an open structure. The RuvB hexamer acts as an ATP-dependent pump, pulling dsDNA into and through the RuvAB complex. RuvB forms 2 homohexamers on either side of HJ DNA bound by 1 or 2 RuvA tetramers; 4 subunits per hexamer contact DNA at a time. Coordinated motions by a converter formed by DNA-disengaged RuvB subunits stimulates ATP hydrolysis and nucleotide exchange. Immobilization of the converter enables RuvB to convert the ATP-contained energy into a lever motion, pulling 2 nucleotides of DNA out of the RuvA tetramer per ATP hydrolyzed, thus driving DNA branch migration. The RuvB motors rotate together with the DNA substrate, which together with the progressing nucleotide cycle form the mechanistic basis for DNA recombination by continuous HJ branch migration. Branch migration allows RuvC to scan DNA until it finds its consensus sequence, where it cleaves and resolves cruciform DNA. This is Holliday junction branch migration complex subunit RuvB from Lactobacillus johnsonii (strain CNCM I-12250 / La1 / NCC 533).